A 598-amino-acid chain; its full sequence is UvrABC system protein C (598 aa).

Positions Ser-13–Val-92 constitute a GIY-YIG domain. Residues Arg-206–Thr-241 form the UVR domain.

Belongs to the UvrC family. In terms of assembly, interacts with UvrB in an incision complex.

It is found in the cytoplasm. Functionally, the UvrABC repair system catalyzes the recognition and processing of DNA lesions. UvrC both incises the 5' and 3' sides of the lesion. The N-terminal half is responsible for the 3' incision and the C-terminal half is responsible for the 5' incision. This Chlamydia trachomatis serovar A (strain ATCC VR-571B / DSM 19440 / HAR-13) protein is UvrABC system protein C.